A 488-amino-acid polypeptide reads, in one-letter code: MELYSLTVHELKELLHKREVSAQEVTKSYLERIKEVEPKIDALVTITEEFALERAKVADEMIKNGEAKDLTGIPVIIKDNISTEGIRTTCSSKMLENYIPPYNATVVERLLNEGVVILGKSNLDEFAMGSSTENSAFKTTKNPWDLSRVPGGSSGGSAAAVAADEAAFALGSDTGGSIRQPASLCGVVGMKPTYGLVSRYGLVAFASSLDQIGPFTKDVTDCAIVLNAIAGHDPMDSTSVKIEKPDYTSYLKEDIKGLRIGVAKEFFGAGIEEGVKETVEKAIKVFEDLGAEIIDISVPYVEYALPAYYIIASAEASSNLARYDGIRYGHIAKNYEDLVDMYMTSRSEGFGKEVKRRIMLGTYALSSGYYDAYYKKALKVRTLIKNDFERAFEKCDVIVGPTSPTVAFKIGERTNDPLAMYLADIYTVSVNIAGLPAISIPCGLSEGLPVGLQIIGKHFDEGRILNVAYAFEKAYKFDAKPQAIGGER.

Residues Lys-78 and Ser-153 each act as charge relay system in the active site. Ser-177 (acyl-ester intermediate) is an active-site residue.

It belongs to the amidase family. GatA subfamily. Heterotrimer of A, B and C subunits.

The catalysed reaction is L-glutamyl-tRNA(Gln) + L-glutamine + ATP + H2O = L-glutaminyl-tRNA(Gln) + L-glutamate + ADP + phosphate + H(+). Allows the formation of correctly charged Gln-tRNA(Gln) through the transamidation of misacylated Glu-tRNA(Gln) in organisms which lack glutaminyl-tRNA synthetase. The reaction takes place in the presence of glutamine and ATP through an activated gamma-phospho-Glu-tRNA(Gln). This chain is Glutamyl-tRNA(Gln) amidotransferase subunit A, found in Caldanaerobacter subterraneus subsp. tengcongensis (strain DSM 15242 / JCM 11007 / NBRC 100824 / MB4) (Thermoanaerobacter tengcongensis).